The sequence spans 325 residues: Replication factor C small subunit (325 aa).

47 to 54 (GPPGTGKT) serves as a coordination point for ATP.

It belongs to the activator 1 small subunits family. RfcS subfamily. Heteromultimer composed of small subunits (RfcS) and large subunits (RfcL).

Part of the RFC clamp loader complex which loads the PCNA sliding clamp onto DNA. The polypeptide is Replication factor C small subunit (Aeropyrum pernix (strain ATCC 700893 / DSM 11879 / JCM 9820 / NBRC 100138 / K1)).